The following is a 928-amino-acid chain: RhoGEF domain-containing protein gxcH (928 aa).

Residues 30–48 (SKSFDNNNNNNSNTNNIKN) show a composition bias toward low complexity. 3 disordered regions span residues 30–76 (SKSF…PPVP), 90–201 (ITNY…PPLG), and 318–410 (DNGV…NKDT). Positions 93–103 (YIPTTPPSINI) are enriched in polar residues. A compositionally biased stretch (acidic residues) spans 112-123 (DNYDDNYDDNYS). 3 stretches are compositionally biased toward polar residues: residues 129–141 (TSTT…SPEF), 175–187 (ETFN…EGLQ), and 334–367 (KSGT…NLRG). Residues 377–407 (NQTTNKNNSNNNNNNTTTNNNNNNNNNNNNN) show a composition bias toward low complexity. Positions 484-671 (IFNKVVKEII…GKIVSDINGK (188 aa)) constitute a DH domain. The interval 699-807 (FIGEGKVKKV…NKIEDQIVSE (109 aa)) is PH-like. The interval 835–928 (SDSQSDFVDH…NTEPENFSFY (94 aa)) is disordered. Residues 848-857 (QEQQEQQQQQ) are compositionally biased toward low complexity.

Functionally, GTPase-activating protein. The polypeptide is RhoGEF domain-containing protein gxcH (gxcH) (Dictyostelium discoideum (Social amoeba)).